We begin with the raw amino-acid sequence, 355 residues long: Putative L-lysine 2,3-aminomutase (355 aa).

Positions 93-308 constitute a Radical SAM core domain; it reads VHQYANRVLM…KERLSGLSLP (216 aa). Residues Cys108, Cys112, and Cys115 each contribute to the [4Fe-4S] cluster site. Position 320 is an N6-(pyridoxal phosphate)lysine (Lys320).

It belongs to the radical SAM superfamily. KamA family. It depends on [4Fe-4S] cluster as a cofactor. Pyridoxal 5'-phosphate is required as a cofactor.

This chain is Putative L-lysine 2,3-aminomutase, found in Treponema pallidum (strain Nichols).